The chain runs to 686 residues: MTQNTADTHASAQAQEVIAKMRTLIAQVRKHNNAYYVMDEPTISDNEYDQLRLSLIELEERYPELTQPDSPTASVGDNPLPSFSQVQHDIAMLSLGNIFNYQDLQEFMRRVNDRLSDADRNPEYEIEMKLDGLAVSLKYHNGQFVRGVTRGDGQMGEDITQNVKTINNIPLVIEAAQDIDVLEVRGEVLMPKAGFKRLNRLAQENGDKTFANPRNAAAGSLRQLDPAVAASRPLAFYAYSVNQGLPEAITLQSAALTWLKQLGFTVSDFERVKTAQQVQDYYESMIQKRADLAFEIDGMVIKVDDLTLQSQLGALSREPRWATAYKFPAETVMTTLNSIEWQVGRTGQLTPVGKLEPVQVGGVTVSNVTLHNFGEIQRLDVRAGDTVSVHRAGDVIPKVTRVWHDLRPEGTSAVTLPTHCPVCDSPVVLPEGEALARCTGELFCPAQQQEALIHFVSRKAMDIDGLGERWLISFFEHGIVKTVADIYHLNEHADELVTLEKLGEKSVSNMLRAIEESKKTTLARFIYALGIRGVGETTAQNLAQYFGDLPELMGASIDALEAVPDVGHITAELIYNFFRAEHNIEVINALQQAGVYWDKVEQQALDNLPLEGQTWVITGTLVASGMSRDDAKAHLQALGAKVSGSVSAKTSALLAGEKAGSKLTKAQSLGVRVVLEDEFLKMIGAS.

NAD(+) contacts are provided by residues 45–49 (DNEYD), 94–95 (SL), and glutamate 127. Lysine 129 serves as the catalytic N6-AMP-lysine intermediate. Residues arginine 150, glutamate 187, lysine 302, and lysine 326 each contribute to the NAD(+) site. The Zn(2+) site is built by cysteine 420, cysteine 423, cysteine 438, and cysteine 444. Positions 605–686 (LDNLPLEGQT…DEFLKMIGAS (82 aa)) constitute a BRCT domain.

It belongs to the NAD-dependent DNA ligase family. LigA subfamily. Mg(2+) serves as cofactor. Requires Mn(2+) as cofactor.

The catalysed reaction is NAD(+) + (deoxyribonucleotide)n-3'-hydroxyl + 5'-phospho-(deoxyribonucleotide)m = (deoxyribonucleotide)n+m + AMP + beta-nicotinamide D-nucleotide.. Its function is as follows. DNA ligase that catalyzes the formation of phosphodiester linkages between 5'-phosphoryl and 3'-hydroxyl groups in double-stranded DNA using NAD as a coenzyme and as the energy source for the reaction. It is essential for DNA replication and repair of damaged DNA. The polypeptide is DNA ligase (Psychrobacter sp. (strain PRwf-1)).